A 302-amino-acid polypeptide reads, in one-letter code: L-aminoadipate-semialdehyde dehydrogenase-phosphopantetheinyl transferase (302 aa).

Residues Arg-44, 83 to 88 (RTGKGK), and 105 to 108 (NVSH) each bind CoA. Positions 126 and 178 each coordinate Mg(2+). 178–182 (ESFIK) contributes to the CoA binding site.

Belongs to the P-Pant transferase superfamily. AcpS family. In terms of assembly, monomer. The cofactor is Mg(2+).

The protein localises to the cytoplasm. It localises to the cytosol. The catalysed reaction is apo-[ACP] + CoA = holo-[ACP] + adenosine 3',5'-bisphosphate + H(+). The enzyme catalyses apo-[ACP] + acetyl-CoA = acetyl-[ACP] + adenosine 3',5'-bisphosphate + H(+). Its function is as follows. Catalyzes the post-translational modification of target proteins by phosphopantetheine. Can transfer the 4'-phosphopantetheine moiety from coenzyme A, regardless of whether the CoA is presented in the free thiol form or as an acetyl thioester, to a serine residue of a broad range of acceptors. In Xenopus laevis (African clawed frog), this protein is L-aminoadipate-semialdehyde dehydrogenase-phosphopantetheinyl transferase (aasdhppt).